The sequence spans 513 residues: ATP synthase subunit alpha, mitochondrial (513 aa).

170 to 177 (GDRQTGKT) lines the ATP pocket.

This sequence belongs to the ATPase alpha/beta chains family. As to quaternary structure, F-type ATPases have 2 components, CF(1) - the catalytic core - and CF(0) - the membrane proton channel. CF(1) has five subunits: alpha(3), beta(3), gamma(1), delta(1), epsilon(1). CF(0) has three main subunits: a, b and c.

The protein localises to the mitochondrion. It is found in the mitochondrion inner membrane. Functionally, mitochondrial membrane ATP synthase (F(1)F(0) ATP synthase or Complex V) produces ATP from ADP in the presence of a proton gradient across the membrane which is generated by electron transport complexes of the respiratory chain. F-type ATPases consist of two structural domains, F(1) - containing the extramembraneous catalytic core, and F(0) - containing the membrane proton channel, linked together by a central stalk and a peripheral stalk. During catalysis, ATP synthesis in the catalytic domain of F(1) is coupled via a rotary mechanism of the central stalk subunits to proton translocation. Subunits alpha and beta form the catalytic core in F(1). Rotation of the central stalk against the surrounding alpha(3)beta(3) subunits leads to hydrolysis of ATP in three separate catalytic sites on the beta subunits. Subunit alpha does not bear the catalytic high-affinity ATP-binding sites. The polypeptide is ATP synthase subunit alpha, mitochondrial (ATPA) (Marchantia polymorpha (Common liverwort)).